We begin with the raw amino-acid sequence, 158 residues long: MALEAAKALQQLRTGDLNAFNFVYISGEGATSNPGPFTPLFGRVKGETETGLMKIQSKVANFRLFIVRPSHVDSKGHKAIAPYIPQPTVLLRAANLALGPALRGFLKPYNSPTAPLGEFLVDLATGAQQGRLHGDGVECRGASTIISNVGFRRLMGLS.

It participates in polyketide biosynthesis. Its function is as follows. Part of the gene cluster B that mediates the biosynthesis of botcinic acid and its botcinin derivatives, acetate-derived polyketides that contribute to virulence when combined with the sesquiterpene botrydial. Botcinic acid and its derivatives have been shown to induce chlorosis and necrosis during host plant infection, but also have antifungal activities. Two polyketide synthases, BOA6 and BOA9, are involved in the biosynthesis of botcinins. BOA6 mediates the formation of the per-methylated tetraketide core by condensation of four units of malonyl-CoA with one unit of acetyl-CoA, which would be methylated in activated methylene groups to yield a bicyclic acid intermediate that could then either be converted to botrylactone derivatives or lose the starter acetate unit through a retro-Claisen type C-C bond cleavage to yield botcinin derivatives. The second polyketide synthase, BOA9, is probably required for the biosynthesis of the tetraketide side chain of botcinins. The methyltransferase (MT) domain within BOA6 is probably responsible for the incorporation of four methyl groups. The trans-enoyl reductase BOA5 might take over the enoyl reductase function of BOA6 that misses an ER domain. The monooxygenases BOA2, BOA3 and BOA4 might be involved in further hydroxylations at C4, C5 and C8, whereas BOA7, close to BOA9, could potentially be involved in the hydroxylation at C4 in the side chain of botcinins. This Botryotinia fuckeliana (strain B05.10) (Noble rot fungus) protein is Botcinic acid biosynthesis cluster B protein 16.